A 282-amino-acid polypeptide reads, in one-letter code: Bifunctional protein FolD (282 aa).

Residues 164–166 (GRS) and serine 189 contribute to the NADP(+) site.

The protein belongs to the tetrahydrofolate dehydrogenase/cyclohydrolase family. Homodimer.

It carries out the reaction (6R)-5,10-methylene-5,6,7,8-tetrahydrofolate + NADP(+) = (6R)-5,10-methenyltetrahydrofolate + NADPH. It catalyses the reaction (6R)-5,10-methenyltetrahydrofolate + H2O = (6R)-10-formyltetrahydrofolate + H(+). It participates in one-carbon metabolism; tetrahydrofolate interconversion. In terms of biological role, catalyzes the oxidation of 5,10-methylenetetrahydrofolate to 5,10-methenyltetrahydrofolate and then the hydrolysis of 5,10-methenyltetrahydrofolate to 10-formyltetrahydrofolate. The protein is Bifunctional protein FolD of Streptococcus suis (strain 98HAH33).